Here is a 490-residue protein sequence, read N- to C-terminus: Trigger factor (490 aa).

Residues 162–243 (GDFVSIDLSA…VGSIKERELP (82 aa)) enclose the PPIase FKBP-type domain. The interval 433–490 (VDAVLGPRRGGADEAGAEAEAAEEKPAKAKKSADSEKTDKSEKAEKKSKKKSKDDDAE) is disordered. Residues 454–477 (AEEKPAKAKKSADSEKTDKSEKAE) are compositionally biased toward basic and acidic residues.

Belongs to the FKBP-type PPIase family. Tig subfamily.

Its subcellular location is the cytoplasm. The catalysed reaction is [protein]-peptidylproline (omega=180) = [protein]-peptidylproline (omega=0). Involved in protein export. Acts as a chaperone by maintaining the newly synthesized protein in an open conformation. Functions as a peptidyl-prolyl cis-trans isomerase. The protein is Trigger factor of Mycobacteroides abscessus (strain ATCC 19977 / DSM 44196 / CCUG 20993 / CIP 104536 / JCM 13569 / NCTC 13031 / TMC 1543 / L948) (Mycobacterium abscessus).